Reading from the N-terminus, the 451-residue chain is Trigger factor (451 aa).

One can recognise a PPIase FKBP-type domain in the interval 173–258 (GDRVTVDFVG…LKKVEWAHLP (86 aa)).

The protein belongs to the FKBP-type PPIase family. Tig subfamily.

Its subcellular location is the cytoplasm. The enzyme catalyses [protein]-peptidylproline (omega=180) = [protein]-peptidylproline (omega=0). Its function is as follows. Involved in protein export. Acts as a chaperone by maintaining the newly synthesized protein in an open conformation. Functions as a peptidyl-prolyl cis-trans isomerase. The chain is Trigger factor from Cupriavidus taiwanensis (strain DSM 17343 / BCRC 17206 / CCUG 44338 / CIP 107171 / LMG 19424 / R1) (Ralstonia taiwanensis (strain LMG 19424)).